A 90-amino-acid chain; its full sequence is Progonadoliberin-3 (90 aa).

Positions 1–23 (MEANSRVMVRVLLLALVVQVTLS) are cleaved as a signal peptide. A Pyrrolidone carboxylic acid modification is found at glutamine 24. Glycine 33 carries the post-translational modification Glycine amide. A disordered region spans residues 56-90 (LPEEASAQTQERLRPYNVINDDSSHFDRKKRSPNK).

Belongs to the GnRH family.

The protein resides in the secreted. In terms of biological role, stimulates the secretion of gonadotropins. This is Progonadoliberin-3 (gnrh3) from Dicentrarchus labrax (European seabass).